The sequence spans 591 residues: Asparagine synthetase [glutamine-hydrolyzing] 2 (591 aa).

Catalysis depends on C2, which acts as the For GATase activity. The region spanning 2–185 is the Glutamine amidotransferase type-2 domain; that stretch reads CGILAVLGVA…PGHLYSSKTG (184 aa). L-glutamine-binding positions include 50–54, 75–77, and D98; these read RLAIV and NGE. Positions 193–516 constitute an Asparagine synthetase domain; it reads PPWFSESIPS…PKNAARLTVP (324 aa). ATP contacts are provided by residues L231, I267, and 341-342; that span reads SG.

In terms of tissue distribution, expressed in companion cells of leaf sheath vascular bundles, and phloem-parenchyma cells, nucellar projections and nucellar epidermis of dorsal vascular bundles of grains.

It carries out the reaction L-aspartate + L-glutamine + ATP + H2O = L-asparagine + L-glutamate + AMP + diphosphate + H(+). It functions in the pathway amino-acid biosynthesis; L-asparagine biosynthesis; L-asparagine from L-aspartate (L-Gln route): step 1/1. In terms of biological role, essential for nitrogen assimilation, distribution and remobilization within the plant via the phloem. The sequence is that of Asparagine synthetase [glutamine-hydrolyzing] 2 from Oryza sativa subsp. japonica (Rice).